Reading from the N-terminus, the 73-residue chain is Venom protein 55.1 (73 aa).

Positions 1–19 (MNFLCILFVVSLISSLSKC) are cleaved as a signal peptide. Proline amide is present on P57. Positions 61–73 (RRSFDLYALVNAK) are excised as a propeptide.

Belongs to the diuretic hormone class 2 family. In terms of tissue distribution, expressed by the venom gland.

It is found in the secreted. Functionally, regulates fluid secretion. The polypeptide is Venom protein 55.1 (Lychas mucronatus (Chinese swimming scorpion)).